A 713-amino-acid polypeptide reads, in one-letter code: Peroxisomal biogenesis factor 8 (713 aa).

The segment at 1–31 (MYRLGSQGRSIQSQLQNGDSSSGRPLQLQGT) is disordered. Over residues 7–30 (QGRSIQSQLQNGDSSSGRPLQLQG) the composition is skewed to polar residues. Residues 711–713 (AKL) carry the Microbody targeting signal motif.

Interacts with PEX5 (via N-terminus).

Its subcellular location is the peroxisome membrane. Functionally, essential component of the machinery required for the import of both PTS1 and PTS2 (and perhaps all) peroxisomal matrix proteins. Binding of PEX8 to the N-terminus of PEX5 cargo receptor induces a conformational change of the TPR domains and decrease their binding affinity to cargo, facilitating the release of the PTS1 proteins within the peroxisome. The sequence is that of Peroxisomal biogenesis factor 8 from Komagataella phaffii (strain GS115 / ATCC 20864) (Yeast).